We begin with the raw amino-acid sequence, 143 residues long: Large ribosomal subunit protein uL11 (143 aa).

This sequence belongs to the universal ribosomal protein uL11 family. Part of the ribosomal stalk of the 50S ribosomal subunit. Interacts with L10 and the large rRNA to form the base of the stalk. L10 forms an elongated spine to which L12 dimers bind in a sequential fashion forming a multimeric L10(L12)X complex. In terms of processing, one or more lysine residues are methylated.

In terms of biological role, forms part of the ribosomal stalk which helps the ribosome interact with GTP-bound translation factors. This chain is Large ribosomal subunit protein uL11, found in Borreliella afzelii (strain PKo) (Borrelia afzelii).